The sequence spans 707 residues: Phosphoprotein (707 aa).

The segment at 1-35 (MDKLDLVNDGLDIIDFIQKNQKEIQKTYGRSSIQQ) is N0 binding. 4 disordered regions span residues 26–103 (KTYG…EDPD), 193–229 (FVPK…PRGN), 254–446 (FAKS…AENV), and 454–473 (VTRN…SLDD). 2 stretches are compositionally biased toward polar residues: residues 28-37 (YGRSSIQQPS) and 77-96 (DLSS…SNTR). Position 257 is a phosphoserine; by host (S257). Positions 296–317 (FPEKEETPDVRRKDSLMQDSCK) are enriched in basic and acidic residues. Residue S350 is modified to Phosphoserine; by host. Residues 435–446 (NQESKSVTAENV) show a composition bias toward polar residues. The tract at residues 473-578 (DKYIMPSDDF…LVSMMIMIPG (106 aa)) is multimerization.

As to quaternary structure, homotetramer. Interacts (via multimerization domain) with polymerase L; this interaction forms the polymerase L-P complex. Interacts (via N-terminus) with N0 (via Ncore); this interaction allows P to chaperon N0 to avoid N polymerization before encapsidation. Interacts (via C-terminus) with N-RNA template; this interaction positions the polymerase on the template for both transcription and replication.

Essential cofactor of the RNA polymerase L that plays a central role in the transcription and replication by forming the polymerase complex with RNA polymerase L and recruiting L to the genomic N-RNA template for RNA synthesis. Also plays a central role in the encapsidation of nascent RNA chains by forming the encapsidation complex with the nucleocapsid protein N (N-P complex). Acts as a chaperone for newly synthesized free N protein, so-called N0, allowing encapsidation of nascent RNA chains during replication. The nucleoprotein protein N prevents excessive phosphorylation of P, which leads to down-regulation of viral transcription/ replication. Participates, together with N, in the formation of viral factories (viroplasms), which are large inclusions in the host cytoplasm where replication takes place. The chain is Phosphoprotein (P/V/C) from Equus caballus (Horse).